The following is a 197-amino-acid chain: Isopentenyl-diphosphate Delta-isomerase (197 aa).

Mn(2+) is bound by residues His-41 and His-48. A Nudix hydrolase domain is found at 46–183 (QLHRAFSVFL…AWFMTVLDAA (138 aa)). The active site involves Cys-83. Residue His-85 coordinates Mn(2+). Glu-103 is a binding site for Mg(2+). Mn(2+) is bound by residues Glu-130 and Glu-132. Residue Glu-132 is part of the active site.

Belongs to the IPP isomerase type 1 family. Mg(2+) is required as a cofactor. It depends on Mn(2+) as a cofactor.

Its subcellular location is the cytoplasm. The enzyme catalyses isopentenyl diphosphate = dimethylallyl diphosphate. It participates in isoprenoid biosynthesis; dimethylallyl diphosphate biosynthesis; dimethylallyl diphosphate from isopentenyl diphosphate: step 1/1. Its function is as follows. Catalyzes the 1,3-allylic rearrangement of the homoallylic substrate isopentenyl (IPP) to its highly electrophilic allylic isomer, dimethylallyl diphosphate (DMAPP). The protein is Isopentenyl-diphosphate Delta-isomerase of Streptomyces griseus subsp. griseus (strain JCM 4626 / CBS 651.72 / NBRC 13350 / KCC S-0626 / ISP 5235).